The primary structure comprises 1248 residues: Structural maintenance of chromosomes protein 1B (1248 aa).

32–39 lines the ATP pocket; that stretch reads GPNGSGKS. Residues 163-502 are a coiled coil; sequence EFIGEYEAKK…EGKRQQKRAE (340 aa). Positions 514–629 constitute an SMC hinge domain; it reads SVFGRLLDLC…ETVEEARHIA (116 aa). N6-acetyllysine is present on residues Lys-648, Lys-713, and Lys-1032. The stretch at 666-912 forms a coiled coil; the sequence is WDEKELHNLR…REVGKLQKEV (247 aa). Residues 1219–1228 show a composition bias toward basic and acidic residues; it reads PDTEDQEGSR. Positions 1219-1248 are disordered; sequence PDTEDQEGSRSHRKPRVPRVSMSPKSPQSR.

It belongs to the SMC family. SMC1 subfamily. Forms a heterodimer with SMC3. Component of a meiosis-specific cohesin complex, probably composed of the SMC1B and SMC3 heterodimer attached via their SMC hinge domain, RAD21 (or its meiosis-specific related protein REC8), which link them, and STAG3, which interacts with RAD21 or REC8. The cohesin complex interacts with the cohesin loading complex subunits NIPBL/Scc2 (via HEAT repeats) and MAU2/Scc4. NIPBL directly contacts all members of the complex, RAD21, SMC1A/B, SMC3 and STAG1. Spermatocytes (at protein level). Testis and ovary specific. Not expressed in somatic cells.

It is found in the nucleus. Its subcellular location is the chromosome. It localises to the centromere. In terms of biological role, meiosis-specific component of cohesin complex. Required for the maintenance of meiotic cohesion, but not, or only to a minor extent, for its establishment. Contributes to axial element (AE) formation and the organization of chromatin loops along the AE. Plays a key role in synapsis, recombination and chromosome movements. The cohesin complex is required for the cohesion of sister chromatids after DNA replication. The cohesin complex apparently forms a large proteinaceous ring within which sister chromatids can be trapped. At anaphase, the complex is cleaved and dissociates from chromatin, allowing sister chromatids to segregate. The meiosis-specific cohesin complex probably replaces mitosis specific cohesin complex when it dissociates from chromatin during prophase I. This is Structural maintenance of chromosomes protein 1B (Smc1b) from Mus musculus (Mouse).